The primary structure comprises 297 residues: ER membrane protein complex subunit 2 (297 aa).

At alanine 2 the chain carries N-acetylalanine. TPR repeat units lie at residues 87-120 (HRVK…DPTN), 155-188 (QEAW…NPYN), and 192-225 (CQQY…NNRN). An N6-acetyllysine modification is found at lysine 255.

The protein belongs to the EMC2 family. Component of the ER membrane protein complex (EMC).

The protein resides in the endoplasmic reticulum membrane. Functionally, part of the endoplasmic reticulum membrane protein complex (EMC) that enables the energy-independent insertion into endoplasmic reticulum membranes of newly synthesized membrane proteins. Preferentially accommodates proteins with transmembrane domains that are weakly hydrophobic or contain destabilizing features such as charged and aromatic residues. Involved in the cotranslational insertion of multi-pass membrane proteins in which stop-transfer membrane-anchor sequences become ER membrane spanning helices. It is also required for the post-translational insertion of tail-anchored/TA proteins in endoplasmic reticulum membranes. By mediating the proper cotranslational insertion of N-terminal transmembrane domains in an N-exo topology, with translocated N-terminus in the lumen of the ER, controls the topology of multi-pass membrane proteins like the G protein-coupled receptors. By regulating the insertion of various proteins in membranes, it is indirectly involved in many cellular processes. This is ER membrane protein complex subunit 2 from Bos taurus (Bovine).